The chain runs to 443 residues: EGF-containing fibulin-like extracellular matrix protein 2 (443 aa).

Positions 1 to 27 (MLPFASCLPGSLLLWAFLLLLLGAASP) are cleaved as a signal peptide. Q28 is subject to Pyrrolidone carboxylic acid. Residues 36–81 (YTECTDGYEWDADSQHCRDVNECLTIPEACKGEMKCINHYGGYLCL) form the EGF-like 1; atypical domain. 18 disulfides stabilise this stretch: C58-C121, C65-C80, C71-C109, C127-C140, C134-C149, C151-C162, C168-C177, C173-C186, C188-C201, C207-C217, C213-C226, C228-C241, C247-C258, C254-C267, C269-C281, C287-C300, C294-C309, and C315-C327. The segment at 91–117 (LHGEGPPPPAAHAQQPNPCPQGYEPDE) is disordered. The EGF-like 2; calcium-binding domain maps to 123-163 (DVDECTQALHDCRPSQDCHNLPGSYQCTCPDGYRKIGPECV). The region spanning 164-202 (DIDECRYRYCQHRCVNLPGSFRCQCEPGFQLGPNNRSCV) is the EGF-like 3; calcium-binding domain. N-linked (GlcNAc...) asparagine glycosylation is present at N198. Residues 203 to 242 (DVNECDMGAPCEQRCFNSYGTFLCRCNQGYELHRDGFSCS) enclose the EGF-like 4; calcium-binding domain. Positions 243–282 (DIDECGYSSYLCQYRCVNEPGRFSCHCPQGYQLLATRLCQ) constitute an EGF-like 5; calcium-binding domain. An EGF-like 6; calcium-binding domain is found at 283–328 (DIDECETGAHQCSEAQTCVNFHGGYRCVDTNRCVEPYVQVSDNRCL). N-linked (GlcNAc...) asparagine glycosylation occurs at N394.

It belongs to the fibulin family. Homodimer; disulfide-linked. Multimer; allows heparin binding. Monomer. Binds preferentially to p53 mutants. Interacts with FBN1 (via N-terminal domain); this interaction inhibits EFEMP2 binding to LOX and ELN. Interacts with ELN with moderate affinity; this interaction regulates ELN self-assembly maturation stage. Interacts with PCOLCE. Interacts with collagen type IV trimer (COL4A1-COL4A1-COL4A2), NID2 and moderately with COL15A1-derived endostatin. Interacts with EMILIN1; this interaction promotes the incorporation of EFEMP2 into the extracellular matrix. Interacts with LTBP4; the LTBP4 long form (LTBP4L) has a stronger binding affinity than the LTBP4 short form and the LTBP4 long form promotes fibrillar deposition of EFEMP2. Interacts with LOX (via propeptide); this interaction is strong and facilitates formation of ternary complexes with ELN during elastic fiber assembly; this interaction limits interaction of EFEMP2 with FBLN5. Interacts with PITX2. Interacts with FBLN5 with moderate affinity. Interacts with LOXL1 (via propeptide), LTBP1 and TGFB1 stronger than with LOXL2 and LTBP3. In terms of processing, N-glycosylated; contains mostly complex-type glycans. Not O-glycosylated. Post-translationally, cleaved by ELANE; produces a 50-55 kDa fragment. Cleaved by MMP2 and MMP9; produces several fragments. As to expression, expressed in elastic fibers of the skin, near the dermal-epidermal junction, surrounding the hair follicles and throughout the dermis. Expressed in tendon around tenocytes. Prominently expressed in cartilage, bone, perichondrium and ligaments. Also detected in bone marrow stroma. Expressed in aorta, lung, and esophagus.

It localises to the secreted. Its subcellular location is the extracellular space. It is found in the extracellular matrix. The protein localises to the basement membrane. In terms of biological role, plays a crucial role in elastic fiber formation in tissue, and in the formation of ultrastructural connections between elastic laminae and smooth muscle cells in the aorta, therefore participates in terminal differentiation and maturation of smooth muscle cell (SMC) and in the mechanical properties and wall integrity maintenance of the aorta. In addition, is involved in the control of collagen fibril assembly in tissue throught proteolytic activation of LOX leading to cross- linking of collagen and elastin. Also promotes ELN coacervation and participates in the deposition of ELN coacervates on to microfibrils but also regulates ELN cross- linking through LOX interaction. Moreover adheres to the cells through heparin binding in a calcium-dependent manner and regulates vascularlar smooth muscle cells proliferation through angiotensin signaling. In Mus musculus (Mouse), this protein is EGF-containing fibulin-like extracellular matrix protein 2.